Consider the following 398-residue polypeptide: Acetyl-CoA acetyltransferase (398 aa).

Ser2 carries the N-acetylserine modification. Residue Cys91 is the Acyl-thioester intermediate of the active site. 2 residues coordinate CoA: Tyr186 and Lys231. Position 186 (Tyr186) interacts with K(+). K(+) is bound by residues Ala248, Ala249, and Ala251. Ser252 is a CoA binding site. Val350 lines the K(+) pocket. Catalysis depends on proton acceptor residues His354 and Cys384.

The protein belongs to the thiolase-like superfamily. Thiolase family. In terms of assembly, homotetramer.

The protein resides in the cytoplasm. The catalysed reaction is 2 acetyl-CoA = acetoacetyl-CoA + CoA. The protein operates within metabolic intermediate biosynthesis; (R)-mevalonate biosynthesis; (R)-mevalonate from acetyl-CoA: step 1/3. Its function is as follows. Acetyl-CoA acetyltransferase; part of the first module of ergosterol biosynthesis pathway that includes the early steps of the pathway, conserved across all eukaryotes, and which results in the formation of mevalonate from acetyl-coenzyme A (acetyl-CoA). In this module, the acetyl-CoA acetyltransferase ERG10 catalyzes the formation of acetoacetyl-CoA. The hydroxymethylglutaryl-CoA synthase ERG13 then condenses acetyl-CoA with acetoacetyl-CoA to form HMG-CoA. The rate-limiting step of the early module is the reduction to mevalonate by the 3-hydroxy-3-methylglutaryl-coenzyme A (HMG-CoA) reductases HMG1 and HMG2 which are derived from a single ancestral HMGR gene by gene duplication. This Saccharomyces pastorianus (strain ATCC 76670 / Carlsberg bottom yeast no.2 / CBS 1503 / CLIB 180 / NBRC 10610 / NRRL Y-1525) (Saaz-type lager yeast) protein is Acetyl-CoA acetyltransferase.